We begin with the raw amino-acid sequence, 311 residues long: Ornithine carbamoyltransferase (311 aa).

Residues 52–55 (STRT), Q79, R103, and 129–132 (HPVQ) each bind carbamoyl phosphate. L-ornithine-binding positions include N167, D226, and 230 to 231 (SM). Residues 266–267 (CL) and R294 contribute to the carbamoyl phosphate site.

The protein belongs to the aspartate/ornithine carbamoyltransferase superfamily. OTCase family.

The protein resides in the cytoplasm. The enzyme catalyses carbamoyl phosphate + L-ornithine = L-citrulline + phosphate + H(+). It participates in amino-acid biosynthesis; L-arginine biosynthesis; L-arginine from L-ornithine and carbamoyl phosphate: step 1/3. In terms of biological role, reversibly catalyzes the transfer of the carbamoyl group from carbamoyl phosphate (CP) to the N(epsilon) atom of ornithine (ORN) to produce L-citrulline. In Sorangium cellulosum (strain So ce56) (Polyangium cellulosum (strain So ce56)), this protein is Ornithine carbamoyltransferase.